The chain runs to 979 residues: Pheromone-regulated membrane protein 10 (979 aa).

Disordered stretches follow at residues 1–279 (MGKS…FFSK), 295–318 (LRNV…EVDG), 337–411 (YSSL…PQRV), 432–451 (FSTA…PLLD), and 491–528 (ATKH…LPKF). Residues 15-26 (GGKDARSPETRS) are compositionally biased toward basic and acidic residues. A compositionally biased stretch (low complexity) spans 29 to 38 (SRSSTDNRSS). The span at 54-68 (LDLEEGVDDDADFDW) shows a compositional bias: acidic residues. Positions 77 to 86 (DAQSLDNPFN) are enriched in polar residues. Residues 105 to 115 (AIERDAVDTIR) show a composition bias toward basic and acidic residues. Residues 122–135 (EEPDSASDGEDVGM) are compositionally biased toward acidic residues. Composition is skewed to basic and acidic residues over residues 138 to 148 (EYQRKRERLVD) and 158 to 175 (SPRR…HTET). The span at 192–213 (EAGTGTNENGEASSSGMKSSIN) shows a compositional bias: polar residues. Basic and acidic residues predominate over residues 253–263 (GAEKGMKSMKD). Residues 360–372 (SPSTPSSSPGPES) are compositionally biased toward low complexity. Residues 379–395 (DDYDFDQVDSDGEDSDL) are compositionally biased toward acidic residues. Residues 503 to 515 (ASGSNSELPSFKN) are compositionally biased toward polar residues. Over residues 516–528 (TRPKKNKKHLPKF) the composition is skewed to basic residues. The next 10 helical transmembrane spans lie at 658-678 (WVCV…AFGG), 680-700 (WVNL…QFIV), 710-730 (VFEI…GSIG), 734-754 (ICFG…YIIL), 773-793 (FYAI…AALF), 809-829 (PISP…ISLI), 832-852 (AHWI…VVTY), 864-884 (FTAS…SRVW), 886-906 (GLAV…GVAS), and 946-966 (ITMI…SLIV).

The protein belongs to the ThrE exporter (TC 2.A.79) family.

The protein resides in the membrane. The sequence is that of Pheromone-regulated membrane protein 10 from Zygosaccharomyces rouxii (strain ATCC 2623 / CBS 732 / NBRC 1130 / NCYC 568 / NRRL Y-229).